The following is a 98-amino-acid chain: NADH-ubiquinone oxidoreductase chain 4L (98 aa).

3 consecutive transmembrane segments (helical) span residues 1–21 (MALT…GLLM), 29–49 (SLLC…LTIL), and 61–81 (IILL…LVMV).

Belongs to the complex I subunit 4L family. In terms of assembly, core subunit of respiratory chain NADH dehydrogenase (Complex I) which is composed of 45 different subunits.

Its subcellular location is the mitochondrion inner membrane. It catalyses the reaction a ubiquinone + NADH + 5 H(+)(in) = a ubiquinol + NAD(+) + 4 H(+)(out). Core subunit of the mitochondrial membrane respiratory chain NADH dehydrogenase (Complex I) which catalyzes electron transfer from NADH through the respiratory chain, using ubiquinone as an electron acceptor. Part of the enzyme membrane arm which is embedded in the lipid bilayer and involved in proton translocation. The polypeptide is NADH-ubiquinone oxidoreductase chain 4L (MT-ND4L) (Pteropus dasymallus (Ryukyu flying fox)).